Here is a 342-residue protein sequence, read N- to C-terminus: MKIAIRGGHNFLAKGACGLIDETIEDRKVYKAVIKNLIENNFEVLDVTPGDCDINTDLKLGVDKANNFNADLFISIHFDKCYDKFDGPLGTGTWVCEKGGKAEIYAQNIVDTISEGTSLKNRGVKTNAKLYELNKTIMPAVIVEVCFCESKVDVDIYREKGSDLIGYLIAKGICKSVNKEISSDLPQVNLENTTNSQNNNLFKTNATAKVALDPRDNPSNNYKDLGEIYENERIKILAEVCDLKFFLPATYWQDSLNKESSPIWVNSKQTVLNVDTNATVINVLTELDARYTPSPDSNRMGYVKNQERLFVHKIENNYALATYLASEGYKTAWFTAEYIKLD.

Residues 3–173 (IAIRGGHNFL…LIGYLIAKGI (171 aa)) form the MurNAc-LAA domain.

It to C.perfringens CPE1502.

This is an uncharacterized protein from Clostridium perfringens.